The chain runs to 380 residues: Lipid-A-disaccharide synthase (380 aa).

Belongs to the LpxB family.

The enzyme catalyses a lipid X + a UDP-2-N,3-O-bis[(3R)-3-hydroxyacyl]-alpha-D-glucosamine = a lipid A disaccharide + UDP + H(+). It participates in bacterial outer membrane biogenesis; LPS lipid A biosynthesis. In terms of biological role, condensation of UDP-2,3-diacylglucosamine and 2,3-diacylglucosamine-1-phosphate to form lipid A disaccharide, a precursor of lipid A, a phosphorylated glycolipid that anchors the lipopolysaccharide to the outer membrane of the cell. This is Lipid-A-disaccharide synthase from Azotobacter vinelandii (strain DJ / ATCC BAA-1303).